The primary structure comprises 62 residues: Large ribosomal subunit protein bL28 (62 aa).

Belongs to the bacterial ribosomal protein bL28 family.

This Syntrophomonas wolfei subsp. wolfei (strain DSM 2245B / Goettingen) protein is Large ribosomal subunit protein bL28.